A 96-amino-acid chain; its full sequence is Conantokin Rl-C (96 aa).

The first 21 residues, 1–21 (MQLYTYLYLLVPLVTFHLILG), serve as a signal peptide directing secretion. A propeptide spanning residues 22–78 (TGTLDHGDALTERRSADATALKPEPVLLQKSSARSTDDNGKDTQMKRIFKKRRNKAR) is cleaved from the precursor. The interval 36–85 (SADATALKPEPVLLQKSSARSTDDNGKDTQMKRIFKKRRNKARGEEELSE) is disordered. The span at 56–66 (STDDNGKDTQM) shows a compositional bias: basic and acidic residues. E81 is a binding site for a divalent metal cation. 4-carboxyglutamate occurs at positions 81, 82, 85, 89, and 93. The a divalent metal cation site is built by E85, E89, and E93. N96 bears the Asparagine amide mark.

This sequence belongs to the conotoxin B superfamily. The cofactor is Ca(2+). Mg(2+) serves as cofactor. As to expression, expressed by the venom duct.

It is found in the secreted. Functionally, conantokins inhibit N-methyl-D-aspartate (NMDA) receptors. This toxin has antagonist activity on NR2B/GRIN2B (IC(50)=1.4 uM) and NR2A/GRIN2A (IC(50)=2.9 uM) subunits, when tested on rat receptors. This chain is Conantokin Rl-C, found in Conus rolani (Cone snail).